Reading from the N-terminus, the 248-residue chain is 3-deoxy-manno-octulosonate cytidylyltransferase (248 aa).

This sequence belongs to the KdsB family.

It localises to the cytoplasm. The catalysed reaction is 3-deoxy-alpha-D-manno-oct-2-ulosonate + CTP = CMP-3-deoxy-beta-D-manno-octulosonate + diphosphate. It functions in the pathway nucleotide-sugar biosynthesis; CMP-3-deoxy-D-manno-octulosonate biosynthesis; CMP-3-deoxy-D-manno-octulosonate from 3-deoxy-D-manno-octulosonate and CTP: step 1/1. The protein operates within bacterial outer membrane biogenesis; lipopolysaccharide biosynthesis. Its function is as follows. Activates KDO (a required 8-carbon sugar) for incorporation into bacterial lipopolysaccharide in Gram-negative bacteria. This Salmonella dublin (strain CT_02021853) protein is 3-deoxy-manno-octulosonate cytidylyltransferase.